The chain runs to 444 residues: Putative GTP cyclohydrolase URC1 (444 aa).

Position 268-272 (268-272) interacts with GTP; sequence RVHDE. Cysteine 273, cysteine 284, and cysteine 286 together coordinate Zn(2+). GTP is bound at residue 315-317; it reads EGR. Aspartate 353 (proton acceptor) is an active-site residue. Arginine 355 serves as the catalytic Nucleophile. Positions 377 and 382 each coordinate GTP.

This sequence belongs to the GTP cyclohydrolase II family.

It localises to the cytoplasm. The protein localises to the nucleus. In terms of biological role, involved in uracil catabolism. The sequence is that of Putative GTP cyclohydrolase URC1 (URC1) from Lachancea kluyveri (Yeast).